Consider the following 376-residue polypeptide: Erythronate-4-phosphate dehydrogenase (376 aa).

Substrate contacts are provided by Ser-45 and Thr-66. Residues 126–127, Asp-146, Thr-174, 201–203, and Asp-227 each bind NAD(+); these read QV and ASR. Arg-203 is an active-site residue. The active site involves Glu-232. His-249 (proton donor) is an active-site residue. Gly-252 contacts NAD(+). Residue Tyr-253 participates in substrate binding.

It belongs to the D-isomer specific 2-hydroxyacid dehydrogenase family. PdxB subfamily. As to quaternary structure, homodimer.

The protein resides in the cytoplasm. The enzyme catalyses 4-phospho-D-erythronate + NAD(+) = (R)-3-hydroxy-2-oxo-4-phosphooxybutanoate + NADH + H(+). Its pathway is cofactor biosynthesis; pyridoxine 5'-phosphate biosynthesis; pyridoxine 5'-phosphate from D-erythrose 4-phosphate: step 2/5. Catalyzes the oxidation of erythronate-4-phosphate to 3-hydroxy-2-oxo-4-phosphonooxybutanoate. This chain is Erythronate-4-phosphate dehydrogenase, found in Ectopseudomonas mendocina (strain ymp) (Pseudomonas mendocina).